The following is a 185-amino-acid chain: Ribosome-recycling factor (185 aa).

It belongs to the RRF family.

It localises to the cytoplasm. In terms of biological role, responsible for the release of ribosomes from messenger RNA at the termination of protein biosynthesis. May increase the efficiency of translation by recycling ribosomes from one round of translation to another. The sequence is that of Ribosome-recycling factor from Exiguobacterium sibiricum (strain DSM 17290 / CCUG 55495 / CIP 109462 / JCM 13490 / 255-15).